Here is a 232-residue protein sequence, read N- to C-terminus: Very-long-chain (3R)-3-hydroxyacyl-CoA dehydratase 4 (232 aa).

Residues methionine 1–tyrosine 19 are Cytoplasmic-facing. A helical membrane pass occupies residues leucine 20 to valine 40. The Lumenal segment spans residues arginine 41–alanine 56. The helical transmembrane segment at isoleucine 57–isoleucine 77 threads the bilayer. At glycine 78–cysteine 112 the chain is on the cytoplasmic side. A helical transmembrane segment spans residues valine 113–methionine 133. Over leucine 134–serine 135 the chain is Lumenal. The chain crosses the membrane as a helical span at residues valine 136–tyrosine 156. Tyrosine 156 is an active-site residue. Proline 157 is a topological domain (cytoplasmic). Residues leucine 158–glycine 178 traverse the membrane as a helical segment. The active site involves glutamate 163. Topologically, residues threonine 179 to serine 189 are lumenal. Residues threonine 190 to threonine 210 traverse the membrane as a helical segment. Over tyrosine 211 to valine 232 the chain is Cytoplasmic.

It belongs to the very long-chain fatty acids dehydratase HACD family. As to quaternary structure, may interact with enzymes of the ELO family (including ELOVL1); with those enzymes that mediate condensation, the first of the four steps of the reaction cycle responsible for fatty acids elongation, may be part of a larger fatty acids elongase complex.

Its subcellular location is the endoplasmic reticulum membrane. It catalyses the reaction a very-long-chain (3R)-3-hydroxyacyl-CoA = a very-long-chain (2E)-enoyl-CoA + H2O. The enzyme catalyses (3R)-hydroxyhexadecanoyl-CoA = (2E)-hexadecenoyl-CoA + H2O. The protein operates within lipid metabolism; fatty acid biosynthesis. In terms of biological role, catalyzes the third of the four reactions of the long-chain fatty acids elongation cycle. This endoplasmic reticulum-bound enzymatic process, allows the addition of two carbons to the chain of long- and very long-chain fatty acids/VLCFAs per cycle. This enzyme catalyzes the dehydration of the 3-hydroxyacyl-CoA intermediate into trans-2,3-enoyl-CoA, within each cycle of fatty acid elongation. Thereby, it participates in the production of VLCFAs of different chain lengths that are involved in multiple biological processes as precursors of membrane lipids and lipid mediators. The chain is Very-long-chain (3R)-3-hydroxyacyl-CoA dehydratase 4 from Mus musculus (Mouse).